The following is a 367-amino-acid chain: Glutamate 5-kinase (367 aa).

K10 is an ATP binding site. 3 residues coordinate substrate: S50, D137, and N149. ATP contacts are provided by residues 169 to 170 and 211 to 217; these read TD and TGGMSTK. One can recognise a PUA domain in the interval 275–353; it reads AGEITVDDGA…QQIAEILGYE (79 aa).

The protein belongs to the glutamate 5-kinase family.

It is found in the cytoplasm. It carries out the reaction L-glutamate + ATP = L-glutamyl 5-phosphate + ADP. It participates in amino-acid biosynthesis; L-proline biosynthesis; L-glutamate 5-semialdehyde from L-glutamate: step 1/2. Catalyzes the transfer of a phosphate group to glutamate to form L-glutamate 5-phosphate. This chain is Glutamate 5-kinase, found in Pectobacterium atrosepticum (strain SCRI 1043 / ATCC BAA-672) (Erwinia carotovora subsp. atroseptica).